A 529-amino-acid polypeptide reads, in one-letter code: tRNA-2-methylthio-N(6)-dimethylallyladenosine synthase 1 (529 aa).

Residues 1–21 are disordered; it reads MTQDHIVTERPPATRNDTAGN. The region spanning 25–141 is the MTTase N-terminal domain; the sequence is RTYEVRTLGC…LPVLLERSRH (117 aa). Residues Cys34, Cys70, Cys104, Cys178, Cys182, and Cys185 each contribute to the [4Fe-4S] cluster site. A Radical SAM core domain is found at 164–407; the sequence is RDSAYAAWVS…VALQERISLE (244 aa). One can recognise a TRAM domain in the interval 410 to 480; the sequence is RSLVGTRQEL…PHHLIADGPL (71 aa). The tract at residues 481–504 is disordered; it reads LQHRRTPAGDASERGQTPTTRGVG.

The protein belongs to the methylthiotransferase family. MiaB subfamily. Monomer. It depends on [4Fe-4S] cluster as a cofactor.

It localises to the cytoplasm. It catalyses the reaction N(6)-dimethylallyladenosine(37) in tRNA + (sulfur carrier)-SH + AH2 + 2 S-adenosyl-L-methionine = 2-methylsulfanyl-N(6)-dimethylallyladenosine(37) in tRNA + (sulfur carrier)-H + 5'-deoxyadenosine + L-methionine + A + S-adenosyl-L-homocysteine + 2 H(+). Catalyzes the methylthiolation of N6-(dimethylallyl)adenosine (i(6)A), leading to the formation of 2-methylthio-N6-(dimethylallyl)adenosine (ms(2)i(6)A) at position 37 in tRNAs that read codons beginning with uridine. The polypeptide is tRNA-2-methylthio-N(6)-dimethylallyladenosine synthase 1 (Mycobacterium marinum (strain ATCC BAA-535 / M)).